A 508-amino-acid polypeptide reads, in one-letter code: Probable cytosol aminopeptidase (508 aa).

Mn(2+)-binding residues include Lys274 and Asp279. Lys286 is a catalytic residue. Mn(2+)-binding residues include Asp297, Asp356, and Glu358. Arg360 is an active-site residue.

The protein belongs to the peptidase M17 family. Requires Mn(2+) as cofactor.

The protein localises to the cytoplasm. It carries out the reaction Release of an N-terminal amino acid, Xaa-|-Yaa-, in which Xaa is preferably Leu, but may be other amino acids including Pro although not Arg or Lys, and Yaa may be Pro. Amino acid amides and methyl esters are also readily hydrolyzed, but rates on arylamides are exceedingly low.. The enzyme catalyses Release of an N-terminal amino acid, preferentially leucine, but not glutamic or aspartic acids.. Presumably involved in the processing and regular turnover of intracellular proteins. Catalyzes the removal of unsubstituted N-terminal amino acids from various peptides. In Paraburkholderia phytofirmans (strain DSM 17436 / LMG 22146 / PsJN) (Burkholderia phytofirmans), this protein is Probable cytosol aminopeptidase.